Here is a 1001-residue protein sequence, read N- to C-terminus: DNA topoisomerase 3-alpha (1001 aa).

The 145-residue stretch at 35–179 (KVLCVAEKND…NLQVLRARFS (145 aa)) folds into the Toprim domain. A Topo IA-type catalytic domain is found at 197-617 (DQRVSDAVDV…QQVQKYKQVF (421 aa)). Tyr362 serves as the catalytic O-(5'-phospho-DNA)-tyrosine intermediate. The interval 400 to 424 (GGPTPRNGNKSDQAHPPIHPTKYTN) is disordered. The C4-type zinc-finger motif lies at 658-685 (CPQCNKDMVLKTKKNGGFYLSCMGFPEC). Positions 774–792 (RMDNSQHPQPADSRQTGSS) are enriched in polar residues. Positions 774–810 (RMDNSQHPQPADSRQTGSSKALAQTLPPPTAAGESNS) are disordered. 8 residues coordinate Zn(2+): Cys813, Cys815, Cys838, Cys843, Cys897, Cys899, Cys922, and Cys930. GRF-type zinc fingers lie at residues 813–852 (CNCG…ADSP) and 897–939 (CLCS…VDEN). The segment at 937–1001 (DENTAPGTSG…HTRPFCPQNR (65 aa)) is disordered. Positions 953–964 (DRGRTLESEARS) are enriched in basic and acidic residues.

The protein belongs to the type IA topoisomerase family. As to quaternary structure, binds ssDNA. Interacts (via N-terminal region) with BLM; the interaction is direct. Directly interacts with RMI1. Component of the RMI complex, containing at least TOP3A, RMI1 and RMI2. The RMI complex interacts with BLM. The cofactor is Mg(2+). High expression is found in testis, heart, skeletal muscle and pancreas.

The protein resides in the mitochondrion matrix. It catalyses the reaction ATP-independent breakage of single-stranded DNA, followed by passage and rejoining.. Releases the supercoiling and torsional tension of DNA introduced during the DNA replication and transcription by transiently cleaving and rejoining one strand of the DNA duplex. Introduces a single-strand break via transesterification at a target site in duplex DNA. The scissile phosphodiester is attacked by the catalytic tyrosine of the enzyme, resulting in the formation of a DNA-(5'-phosphotyrosyl)-enzyme intermediate and the expulsion of a 3'-OH DNA strand. The free DNA strand then undergoes passage around the unbroken strand thus removing DNA supercoils. Finally, in the religation step, the DNA 3'-OH attacks the covalent intermediate to expel the active-site tyrosine and restore the DNA phosphodiester backbone. As an essential component of the RMI complex it is involved in chromosome separation and the processing of homologous recombination intermediates to limit DNA crossover formation in cells. Has DNA decatenation activity. It is required for mtDNA decatenation and segregation after completion of replication, in a process that does not require BLM, RMI1 and RMI2. This Homo sapiens (Human) protein is DNA topoisomerase 3-alpha (TOP3A).